We begin with the raw amino-acid sequence, 35 residues long: Cupiennin-2a (35 aa).

The residue at position 35 (Lys35) is a Lysine amide.

In terms of tissue distribution, expressed by the venom gland.

It is found in the secreted. This chain is Cupiennin-2a, found in Cupiennius salei (American wandering spider).